Here is a 463-residue protein sequence, read N- to C-terminus: Sialic acid-binding Ig-like lectin 9 (463 aa).

A signal peptide spans methionine 1–glycine 17. Over glutamine 18–glycine 348 the chain is Extracellular. An Ig-like V-type domain is found at serine 20–threonine 140. Disulfide bonds link cysteine 36–cysteine 170, cysteine 41–cysteine 102, and cysteine 164–cysteine 213. A glycan (N-linked (GlcNAc...) asparagine) is linked at asparagine 101. Arginine 120 lines the N-acetylneuraminate pocket. Asparagine 138 and asparagine 161 each carry an N-linked (GlcNAc...) asparagine glycan. Positions proline 146–histidine 229 constitute an Ig-like C2-type 1 domain. N-linked (GlcNAc...) asparagine glycosylation is found at asparagine 225, asparagine 231, asparagine 238, and asparagine 256. One can recognise an Ig-like C2-type 2 domain in the interval proline 236–serine 336. A disulfide bridge links cysteine 272 with cysteine 320. Asparagine 334 is a glycosylation site (N-linked (GlcNAc...) asparagine). The helical transmembrane segment at valine 349 to valine 369 threads the bilayer. Topologically, residues valine 370–arginine 463 are cytoplasmic. Residues proline 380 to glutamate 428 are disordered. Residues leucine 431–leucine 436 carry the ITIM motif motif. The interval tryptophan 444–arginine 463 is disordered. The short motif at threonine 454–isoleucine 459 is the SLAM-like motif element.

This sequence belongs to the immunoglobulin superfamily. SIGLEC (sialic acid binding Ig-like lectin) family. In terms of tissue distribution, expressed by peripheral blood leukocytes (neutrophils and monocytes but not eosinophils). Found in liver, fetal liver, bone marrow, placenta, spleen and in lower levels in skeletal muscle, fetal brain, stomach, lung, thymus, prostate, brain, mammary, adrenal gland, colon, trachea, cerebellum, testis, small intestine and spinal cordon.

The protein resides in the membrane. In terms of biological role, putative adhesion molecule that mediates sialic-acid dependent binding to cells. Preferentially binds to alpha-2,3- or alpha-2,6-linked sialic acid. The sialic acid recognition site may be masked by cis interactions with sialic acids on the same cell surface. This Homo sapiens (Human) protein is Sialic acid-binding Ig-like lectin 9 (SIGLEC9).